We begin with the raw amino-acid sequence, 31 residues long: Protein YmiC (31 aa).

Residues 9–29 form a helical membrane-spanning segment; it reads WSWMGAFSLSMLFWAELLWII.

It is found in the cell inner membrane. This chain is Protein YmiC, found in Escherichia coli (strain K12).